A 451-amino-acid chain; its full sequence is Lipase member H (451 aa).

The signal sequence occupies residues 1-16 (MLRLCFFISFMCLVKS). An N-linked (GlcNAc...) asparagine glycan is attached at Asn-66. Ser-154 acts as the Nucleophile in catalysis. The active-site Charge relay system is Asp-178. A disulfide bridge connects residues Cys-233 and Cys-246. Catalysis depends on His-248, which acts as the Charge relay system. Disulfide bonds link Cys-270–Cys-281, Cys-284–Cys-292, and Cys-427–Cys-446.

The protein belongs to the AB hydrolase superfamily. Lipase family. Interacts with TTMP/C3orf52. In terms of tissue distribution, expressed in placenta and colon. Weakly expressed in small intestine.

The protein localises to the secreted. Its subcellular location is the cell membrane. It catalyses the reaction 1-hexadecanoyl-2-(9Z-octadecenoyl)-sn-glycero-3-phosphate + H2O = 2-(9Z-octadecenoyl)-sn-glycero-3-phosphate + hexadecanoate + H(+). Hydrolyzes specifically phosphatidic acid (PA) to produce 2-acyl lysophosphatidic acid (LPA; a potent bioactive lipid mediator) and fatty acid. Does not hydrolyze other phospholipids, like phosphatidylserine (PS), phosphatidylcholine (PC) and phosphatidylethanolamine (PE) or triacylglycerol (TG). This chain is Lipase member H (Liph), found in Mus musculus (Mouse).